The chain runs to 448 residues: DNA repair protein RadA (448 aa).

The segment at 10 to 27 adopts a C4-type zinc-finger fold; that stretch reads CQHCGFTSPKWLGKCVQC. 96 to 103 contributes to the ATP binding site; the sequence is GSPGVGKS. The RadA KNRFG motif motif lies at 253–257; that stretch reads KNRFG. Residues 351 to 448 are lon-protease-like; sequence DVFINVSGGI…NVVGKIVEWM (98 aa).

It belongs to the RecA family. RadA subfamily.

In terms of biological role, DNA-dependent ATPase involved in processing of recombination intermediates, plays a role in repairing DNA breaks. Stimulates the branch migration of RecA-mediated strand transfer reactions, allowing the 3' invading strand to extend heteroduplex DNA faster. Binds ssDNA in the presence of ADP but not other nucleotides, has ATPase activity that is stimulated by ssDNA and various branched DNA structures, but inhibited by SSB. Does not have RecA's homology-searching function. In Helicobacter pylori (strain J99 / ATCC 700824) (Campylobacter pylori J99), this protein is DNA repair protein RadA.